The following is an 886-amino-acid chain: Inter-alpha-trypsin inhibitor heavy chain H3 (886 aa).

Positions 1-18 (MWWPYLVLALLSGLEASG) are cleaved as a signal peptide. Positions 19-30 (FPRSPLRLLGKR) are excised as a propeptide. A VIT domain is found at 26–155 (LLGKRSLPEG…KVTFELTYEE (130 aa)). An N-linked (GlcNAc...) asparagine glycan is attached at asparagine 88. The VWFA domain occupies 279–439 (PKNIVFVIDI…YNFLETMALE (161 aa)). N-linked (GlcNAc...) asparagine glycosylation occurs at asparagine 577. Aspartate 646 bears the Aspartate 1-(chondroitin 4-sulfate)-ester mark. A propeptide spanning residues 647-886 (PHFIIQVPGK…HTDYIVPSLF (240 aa)) is cleaved from the precursor.

Belongs to the ITIH family. In terms of assembly, I-alpha-I plasma protease inhibitors are assembled from one or two heavy chains (HC) and one light chain, bikunin. Pre-alpha-inhibitor (P-alpha-I) is composed of ITIH3/HC3 and bikunin. In terms of processing, heavy chains are linked to bikunin via chondroitin 4-sulfate esterified to the alpha-carboxyl of the C-terminal aspartate after propeptide cleavage.

It localises to the secreted. Functionally, may act as a carrier of hyaluronan in serum or as a binding protein between hyaluronan and other matrix protein, including those on cell surfaces in tissues to regulate the localization, synthesis and degradation of hyaluronan which are essential to cells undergoing biological processes. This chain is Inter-alpha-trypsin inhibitor heavy chain H3 (ITIH3), found in Mesocricetus auratus (Golden hamster).